Here is a 446-residue protein sequence, read N- to C-terminus: Sphingomyelinase phosphodiesterase C (446 aa).

The signal sequence occupies residues 1-26 (MKFRNNLTLYLIFIIVFTIYISLTIS). Asn-6 carries N-linked (GlcNAc...) asparagine glycosylation. Residues Asp-39 and His-41 each contribute to the Zn(2+) site. Cysteines 56 and 78 form a disulfide. Residue Asp-107 coordinates Zn(2+). Residues Asn-118 and Asn-128 are each glycosylated (N-linked (GlcNAc...) asparagine). Asn-148 is a Zn(2+) binding site. N-linked (GlcNAc...) asparagine glycosylation is found at Asn-178, Asn-217, Asn-229, and Asn-234. Zn(2+)-binding residues include His-247, His-287, and His-289. Residues Asn-342 and Asn-357 are each glycosylated (N-linked (GlcNAc...) asparagine). Cys-429 and Cys-442 form a disulfide bridge.

It belongs to the acid sphingomyelinase family. It depends on Zn(2+) as a cofactor.

The protein localises to the secreted. The chain is Sphingomyelinase phosphodiesterase C (sgmC) from Dictyostelium discoideum (Social amoeba).